A 403-amino-acid chain; its full sequence is NADH-quinone oxidoreductase subunit D (403 aa).

Belongs to the complex I 49 kDa subunit family. As to quaternary structure, NDH-1 is composed of 14 different subunits. Subunits NuoB, C, D, E, F, and G constitute the peripheral sector of the complex.

It localises to the cell membrane. The catalysed reaction is a quinone + NADH + 5 H(+)(in) = a quinol + NAD(+) + 4 H(+)(out). NDH-1 shuttles electrons from NADH, via FMN and iron-sulfur (Fe-S) centers, to quinones in the respiratory chain. The immediate electron acceptor for the enzyme in this species is believed to be a menaquinone. Couples the redox reaction to proton translocation (for every two electrons transferred, four hydrogen ions are translocated across the cytoplasmic membrane), and thus conserves the redox energy in a proton gradient. This is NADH-quinone oxidoreductase subunit D from Amoebophilus asiaticus (strain 5a2).